A 487-amino-acid polypeptide reads, in one-letter code: METVQLRNPPRRQLKKLDEDSLTKQPEEVFDVLEKLGEGSYGSVYKAIHKETGQIVAIKQVPVESDLQEIIKEISIMQQCDSPHVVKYYGSYFKNTDLWIVMEYCGAGSVSDIIRLRNKTLTEDEIATILQSTLKGLEYLHFMRKIHRDIKAGNILLNTEGHAKLADFGVAGQLTDTMAKRNTVIGTPFWMAPEVIQEIGYNCVADIWSLGITAIEMAEGKPPYADIHPMRAIFMIPTNPPPTFRKPELWSDNFTDFVKQCLVKSPEQRATATQLLQHPFVKSAKGVSILRDLINEAMDVKLKRQESQQREVDQDDEENSEEDEMDSGTMVRAVGDEMGTVRVASTMTDGANTMIEHDDTLPSQLGTMVINTEDEEEEGTMKRRDETMQPAKPSFLEYFEQKEKENQINSFGKSVPGPLKNSSDWKIPQDGDYEFLKSWTVEDLQKRLLALDPMMEQEIEEIRQKYQSKRQPILDAIEAKKRRQQNF.

An N-acetylmethionine modification is found at Met1. The residue at position 3 (Thr3) is a Phosphothreonine. The 252-residue stretch at 30-281 (FDVLEKLGEG…ATQLLQHPFV (252 aa)) folds into the Protein kinase domain. ATP contacts are provided by residues 36 to 44 (LGEGSYGSV) and Lys59. Asp149 functions as the Proton acceptor in the catalytic mechanism. A Phosphothreonine; by autocatalysis modification is found at Thr183. Position 265 is a phosphoserine (Ser265). A coiled-coil region spans residues 290–310 (LRDLINEAMDVKLKRQESQQR). Residues 303–312 (KRQESQQREV) show a composition bias toward basic and acidic residues. Residues 303 to 332 (KRQESQQREVDQDDEENSEEDEMDSGTMVR) are disordered. A compositionally biased stretch (acidic residues) spans 313 to 326 (DQDDEENSEEDEMD). Residue Ser320 is modified to Phosphoserine. Residues Thr340 and Thr367 each carry the phosphothreonine modification. Thr387 is subject to Phosphothreonine; by PKB/AKT1. 2 positions are modified to phosphoserine: Ser410 and Ser414. Residue Tyr433 is modified to Phosphotyrosine. One can recognise an SARAH domain in the interval 433–480 (YEFLKSWTVEDLQKRLLALDPMMEQEIEEIRQKYQSKRQPILDAIEAK).

This sequence belongs to the protein kinase superfamily. STE Ser/Thr protein kinase family. STE20 subfamily. As to quaternary structure, homodimer; mediated via the coiled-coil region. Interacts with NORE1, which inhibits autoactivation. Interacts with and stabilizes SAV1. Interacts with RASSF1. Interacts with FOXO3. Interacts with RASSF2 (via SARAH domain). Interacts with AR, PKB/AKT1, TNNI3 and SIRT1. Interacts with DLG5 (via PDZ domain 3). Interacts with MARK3 and SCRIB in the presence of DLG5. Mg(2+) is required as a cofactor. Autophosphorylated on serine and threonine residues. Phosphorylation at Thr-387 by PKB/AKT1, leads to inhibition of its: kinase activity, nuclear translocation and autophosphorylation at Thr-183. It also diminishes its cleavage by caspases and its ability to phosphorylate FOXO3. Post-translationally, proteolytically cleaved by caspase-3 during apoptosis at Asp-326 and Asp-349 resulting in a 37 kDa or a 39 kDa subunit respectively. The 39 kDa subunit is further cleaved into the 37 kDa form. Proteolytic cleavage results in kinase activation and nuclear translocation of the truncated form (MST1/N). It is less likely that cleavage at Asp-349 is a prerequisite for activation as this site is not conserved in the murine ortholog.

The protein resides in the cytoplasm. It is found in the nucleus. The enzyme catalyses L-seryl-[protein] + ATP = O-phospho-L-seryl-[protein] + ADP + H(+). It carries out the reaction L-threonyl-[protein] + ATP = O-phospho-L-threonyl-[protein] + ADP + H(+). Its activity is regulated as follows. Inhibited by the C-terminal non-catalytic region. Activated by caspase-cleavage. Full activation also requires homodimerization and autophosphorylation of Thr-183. Activated by RASSF1 which acts by preventing its dephosphorylation. In terms of biological role, stress-activated, pro-apoptotic kinase which, following caspase-cleavage, enters the nucleus and induces chromatin condensation followed by internucleosomal DNA fragmentation. Key component of the Hippo signaling pathway which plays a pivotal role in organ size control and tumor suppression by restricting proliferation and promoting apoptosis. The core of this pathway is composed of a kinase cascade wherein STK3/MST2 and STK4/MST1, in complex with its regulatory protein SAV1, phosphorylates and activates LATS1/2 in complex with its regulatory protein MOB1, which in turn phosphorylates and inactivates YAP1 oncoprotein and WWTR1/TAZ. Phosphorylation of YAP1 by LATS2 inhibits its translocation into the nucleus to regulate cellular genes important for cell proliferation, cell death, and cell migration. STK3/MST2 and STK4/MST1 are required to repress proliferation of mature hepatocytes, to prevent activation of facultative adult liver stem cells (oval cells), and to inhibit tumor formation. Phosphorylates 'Ser-14' of histone H2B (H2BS14ph) during apoptosis. Phosphorylates FOXO3 upon oxidative stress, which results in its nuclear translocation and cell death initiation. Phosphorylates MOBKL1A, MOBKL1B and RASSF2. Phosphorylates TNNI3 (cardiac Tn-I) and alters its binding affinity to TNNC1 (cardiac Tn-C) and TNNT2 (cardiac Tn-T). Phosphorylates FOXO1 on 'Ser-212' and regulates its activation and stimulates transcription of PMAIP1 in a FOXO1-dependent manner. Phosphorylates SIRT1 and inhibits SIRT1-mediated p53/TP53 deacetylation, thereby promoting p53/TP53 dependent transcription and apoptosis upon DNA damage. Acts as an inhibitor of PKB/AKT1. Phosphorylates AR on 'Ser-650' and suppresses its activity by intersecting with PKB/AKT1 signaling and antagonizing formation of AR-chromatin complexes. This Chlorocebus aethiops (Green monkey) protein is Serine/threonine-protein kinase 4 (STK4).